A 580-amino-acid chain; its full sequence is Protein O-linked-mannose beta-1,4-N-acetylglucosaminyltransferase 2 (580 aa).

Over 1–4 (MHLS) the chain is Cytoplasmic. A helical; Signal-anchor for type II membrane protein membrane pass occupies residues 5-25 (AVLNALLVSVLAAVLWKHVRL). The Lumenal segment spans residues 26 to 580 (REHAAALEEE…PFADVLVCNT (555 aa)). Residues Asn99 and Asn276 are each glycosylated (N-linked (GlcNAc...) asparagine). Residues 488 to 580 (ARCQASVQGA…PFADVLVCNT (93 aa)) enclose the Fibronectin type-III domain.

The protein belongs to the glycosyltransferase 61 family.

It localises to the endoplasmic reticulum membrane. The enzyme catalyses 3-O-(alpha-D-mannosyl)-L-threonyl-[protein] + UDP-N-acetyl-alpha-D-glucosamine = 3-O-(N-acetyl-beta-D-glucosaminyl-(1-&gt;4)-alpha-D-mannosyl)-L-threonyl-[protein] + UDP + H(+). Its pathway is protein modification; protein glycosylation. Its function is as follows. O-linked mannose beta-1,4-N-acetylglucosaminyltransferase that transfers UDP-N-acetyl-D-glucosamine to the 4-position of the mannose to generate N-acetyl-D-glucosamine-beta-1,4-O-D-mannosylprotein. Involved in the biosynthesis of the phosphorylated O-mannosyl trisaccharide (N-acetylgalactosamine-beta-3-N-acetylglucosamine-beta-4-(phosphate-6-)mannose), a carbohydrate structure present in alpha-dystroglycan (DAG1), which is required for binding laminin G-like domain-containing extracellular proteins with high affinity. The polypeptide is Protein O-linked-mannose beta-1,4-N-acetylglucosaminyltransferase 2 (POMGNT2) (Canis lupus familiaris (Dog)).